We begin with the raw amino-acid sequence, 115 residues long: Large ribosomal subunit protein uL22 (115 aa).

This sequence belongs to the universal ribosomal protein uL22 family. In terms of assembly, part of the 50S ribosomal subunit.

This protein binds specifically to 23S rRNA; its binding is stimulated by other ribosomal proteins, e.g. L4, L17, and L20. It is important during the early stages of 50S assembly. It makes multiple contacts with different domains of the 23S rRNA in the assembled 50S subunit and ribosome. Its function is as follows. The globular domain of the protein is located near the polypeptide exit tunnel on the outside of the subunit, while an extended beta-hairpin is found that lines the wall of the exit tunnel in the center of the 70S ribosome. This Ligilactobacillus salivarius (strain UCC118) (Lactobacillus salivarius) protein is Large ribosomal subunit protein uL22.